We begin with the raw amino-acid sequence, 156 residues long: Small ribosomal subunit protein uS7 (156 aa).

The protein belongs to the universal ribosomal protein uS7 family. Part of the 30S ribosomal subunit. Contacts proteins S9 and S11.

One of the primary rRNA binding proteins, it binds directly to 16S rRNA where it nucleates assembly of the head domain of the 30S subunit. Is located at the subunit interface close to the decoding center, probably blocks exit of the E-site tRNA. The sequence is that of Small ribosomal subunit protein uS7 from Nitratidesulfovibrio vulgaris (strain DSM 19637 / Miyazaki F) (Desulfovibrio vulgaris).